The chain runs to 750 residues: Ribosomal RNA large subunit methyltransferase K/L (750 aa).

One can recognise a THUMP domain in the interval 46-157 (TAYRLCLWSR…RGEAILSLDL (112 aa)).

It belongs to the methyltransferase superfamily. RlmKL family.

It localises to the cytoplasm. It catalyses the reaction guanosine(2445) in 23S rRNA + S-adenosyl-L-methionine = N(2)-methylguanosine(2445) in 23S rRNA + S-adenosyl-L-homocysteine + H(+). It carries out the reaction guanosine(2069) in 23S rRNA + S-adenosyl-L-methionine = N(2)-methylguanosine(2069) in 23S rRNA + S-adenosyl-L-homocysteine + H(+). In terms of biological role, specifically methylates the guanine in position 2445 (m2G2445) and the guanine in position 2069 (m7G2069) of 23S rRNA. This is Ribosomal RNA large subunit methyltransferase K/L from Pseudomonas syringae pv. tomato (strain ATCC BAA-871 / DC3000).